The sequence spans 443 residues: Nuclear hormone receptor family member nhr-60 (443 aa).

The span at 1–20 shows a compositional bias: low complexity; the sequence is MIQSSSSISQDSLDLPSILS. Residues 1-40 form a disordered region; it reads MIQSSSSISQDSLDLPSILSTFSADEPEDEPSPTAVKSTK. Positions 44-121 form a DNA-binding region, nuclear receptor; that stretch reads PTECLICGNS…VGMNPLAMEV (78 aa). 2 NR C4-type zinc fingers span residues 47–67 and 83–104; these read CLICGNSANGHHYDVASCNGC and CKAKGDCFDLTKRKVPLKCRAC. In terms of domain architecture, NR LBD spans 196–439; the sequence is NEFSGLEYLL…KDLVMRVIED (244 aa). The segment at 225–249 is disordered; the sequence is LRRDQLGPPRLPKPPSPGKPRDSQH. Residues 233-242 show a composition bias toward pro residues; the sequence is PRLPKPPSPG.

Belongs to the nuclear hormone receptor family.

It localises to the nucleus. Orphan nuclear receptor (Potential). Required for embryonic and larval morphogenesis and probably for seam cell positioning and migration. The sequence is that of Nuclear hormone receptor family member nhr-60 from Caenorhabditis elegans.